The chain runs to 464 residues: ATP synthase subunit beta (464 aa).

152-159 (GGAGVGKT) contributes to the ATP binding site.

The protein belongs to the ATPase alpha/beta chains family. F-type ATPases have 2 components, CF(1) - the catalytic core - and CF(0) - the membrane proton channel. CF(1) has five subunits: alpha(3), beta(3), gamma(1), delta(1), epsilon(1). CF(0) has three main subunits: a(1), b(2) and c(9-12). The alpha and beta chains form an alternating ring which encloses part of the gamma chain. CF(1) is attached to CF(0) by a central stalk formed by the gamma and epsilon chains, while a peripheral stalk is formed by the delta and b chains.

It localises to the cell membrane. It carries out the reaction ATP + H2O + 4 H(+)(in) = ADP + phosphate + 5 H(+)(out). In terms of biological role, produces ATP from ADP in the presence of a proton gradient across the membrane. The catalytic sites are hosted primarily by the beta subunits. The polypeptide is ATP synthase subunit beta (Clostridioides difficile (strain 630) (Peptoclostridium difficile)).